A 461-amino-acid polypeptide reads, in one-letter code: tRNA modification GTPase MnmE (461 aa).

(6S)-5-formyl-5,6,7,8-tetrahydrofolate-binding residues include R21, E87, and K126. The TrmE-type G domain occupies 222 to 384; the sequence is QSTVVLYGEP…LLELLKSKLT (163 aa). K(+) is bound at residue N232. Residues 232–237, 251–257, and 276–279 contribute to the GTP site; these read NTGKSS, SDVPGTT, and DTAG. S236 serves as a coordination point for Mg(2+). Residues S251, V253, and T256 each coordinate K(+). T257 is a binding site for Mg(2+). K461 is a binding site for (6S)-5-formyl-5,6,7,8-tetrahydrofolate.

Belongs to the TRAFAC class TrmE-Era-EngA-EngB-Septin-like GTPase superfamily. TrmE GTPase family. In terms of assembly, homodimer. Heterotetramer of two MnmE and two MnmG subunits. The cofactor is K(+).

It localises to the cytoplasm. Its function is as follows. Exhibits a very high intrinsic GTPase hydrolysis rate. Involved in the addition of a carboxymethylaminomethyl (cmnm) group at the wobble position (U34) of certain tRNAs, forming tRNA-cmnm(5)s(2)U34. The polypeptide is tRNA modification GTPase MnmE (Leptospira biflexa serovar Patoc (strain Patoc 1 / Ames)).